We begin with the raw amino-acid sequence, 140 residues long: Large ribosomal subunit protein uL22 (140 aa).

The segment at 115-140 (AKPAAAKKDPKAAAAKADANAGTKEG) is disordered.

This sequence belongs to the universal ribosomal protein uL22 family. Part of the 50S ribosomal subunit.

In terms of biological role, this protein binds specifically to 23S rRNA; its binding is stimulated by other ribosomal proteins, e.g. L4, L17, and L20. It is important during the early stages of 50S assembly. It makes multiple contacts with different domains of the 23S rRNA in the assembled 50S subunit and ribosome. Functionally, the globular domain of the protein is located near the polypeptide exit tunnel on the outside of the subunit, while an extended beta-hairpin is found that lines the wall of the exit tunnel in the center of the 70S ribosome. The protein is Large ribosomal subunit protein uL22 of Heliobacterium modesticaldum (strain ATCC 51547 / Ice1).